A 328-amino-acid polypeptide reads, in one-letter code: Alcohol-sensitive RING finger protein 1 (328 aa).

The RING-type 1; atypical zinc-finger motif lies at 18-61 (CSICWESMPSGVGRLMPCGHEYHLACIRKWFHLHSGNRSCPVCR). The RING-type 2; atypical zinc-finger motif lies at 129–177 (CGICGEMNGDIDTCCNRCHHMYHHSCLGQLLVEVNAEREQGWSHCIFCY).

The protein localises to the cytoplasm. It localises to the nucleus. Required for tolerance to alcohol. The chain is Alcohol-sensitive RING finger protein 1 (ASR1) from Eremothecium gossypii (strain ATCC 10895 / CBS 109.51 / FGSC 9923 / NRRL Y-1056) (Yeast).